Consider the following 247-residue polypeptide: Adenosylcobinamide-GDP ribazoletransferase (247 aa).

The next 5 membrane-spanning stretches (helical) occupy residues 34–54 (IVMF…IFIL), 59–79 (CGIP…TGGF), 113–133 (GGLA…ELAL), 138–158 (VLAA…LLMY), and 194–214 (VLLP…AIFI).

This sequence belongs to the CobS family. Requires Mg(2+) as cofactor.

It localises to the cell inner membrane. It catalyses the reaction alpha-ribazole + adenosylcob(III)inamide-GDP = adenosylcob(III)alamin + GMP + H(+). The catalysed reaction is alpha-ribazole 5'-phosphate + adenosylcob(III)inamide-GDP = adenosylcob(III)alamin 5'-phosphate + GMP + H(+). It participates in cofactor biosynthesis; adenosylcobalamin biosynthesis; adenosylcobalamin from cob(II)yrinate a,c-diamide: step 7/7. Its function is as follows. Joins adenosylcobinamide-GDP and alpha-ribazole to generate adenosylcobalamin (Ado-cobalamin). Also synthesizes adenosylcobalamin 5'-phosphate from adenosylcobinamide-GDP and alpha-ribazole 5'-phosphate. This is Adenosylcobinamide-GDP ribazoletransferase from Salmonella arizonae (strain ATCC BAA-731 / CDC346-86 / RSK2980).